The chain runs to 46 residues: Late transcription unit A protein (46 aa).

The chain is Late transcription unit A protein (ltuA) from Chlamydia muridarum (strain MoPn / Nigg).